The following is a 758-amino-acid chain: Protein hunchback (758 aa).

2 disordered regions span residues 30 to 51 and 172 to 214; these read EPGH…PIPS and EKLQ…EDMK. Residues 39–51 show a composition bias toward polar residues; the sequence is SVASSPRQSPIPS. A Phosphothreonine modification is found at T178. S188, S207, S209, and S210 each carry phosphoserine. Positions 198–214 are enriched in basic and acidic residues; that stretch reads EPEKEHDQMSNSSEDMK. C2H2-type zinc fingers lie at residues 240–262, 269–291, 297–319, and 325–349; these read YKCK…TRTH, LQCP…IRKH, FQCD…RKSH, and YRCA…KYGH. Disordered stretches follow at residues 365–416 and 513–536; these read LVID…PVAT and QLQQ…YERK. Composition is skewed to low complexity over residues 398-415 and 513-522; these read VAAV…QPVA and QLQQQNQQQS. Residues 523–532 are compositionally biased toward acidic residues; that stretch reads DNEEEEQDDE. Residues S537 and S540 each carry the phosphoserine modification. Positions 603–695 are disordered; that stretch reads MTSPEQLKVP…TTSAVAAPPS (93 aa). Over residues 652–695 the composition is skewed to low complexity; the sequence is ANTSASSTASSSGNSSNASSNSNGNSSSNSSSNGTTSAVAAPPS. 2 consecutive C2H2-type zinc fingers follow at residues 705–727 and 733–757; these read YECK…MGYH and FKCN…RNAH.

The protein belongs to the hunchback C2H2-type zinc-finger protein family. As to expression, in embryo, expression of maternal transcript is highest in anterior region. Zygotic transcript is expressed in anterior region until the beginning of gastrulation and in posterior region until early gastrulation. After this, it is expressed in developing nervous system.

The protein resides in the nucleus. Functionally, gap class segmentation protein that controls development of head structures. This is Protein hunchback from Drosophila melanogaster (Fruit fly).